We begin with the raw amino-acid sequence, 160 residues long: Keratin-associated protein 9-6 (160 aa).

Repeat copies occupy residues 4–8 (CCSPG), 13–17 (CCRTT), 18–22 (CCRTT), 37–41 (CCQPS), 42–46 (CCVSS), 47–51 (CCQPY), 56–60 (CCQNT), 61–65 (CCRTT), 66–70 (CCQPT), 75–79 (CCQPS), 80–84 (CCSTP), 90–94 (CCGSS), 95–99 (CCGQT), 140–144 (CCQPC), 149–153 (CCVSS), and 154–158 (CCQHS). Positions 4-158 (CCSPGCQPTC…CCVSSCCQHS (155 aa)) are 16 X 5 AA repeats of C-C-[GSVRQ]-[QTSPHN]-[TPSGYC].

Belongs to the KRTAP type 9 family. As to quaternary structure, interacts with hair keratins.

In the hair cortex, hair keratin intermediate filaments are embedded in an interfilamentous matrix, consisting of hair keratin-associated proteins (KRTAP), which are essential for the formation of a rigid and resistant hair shaft through their extensive disulfide bond cross-linking with abundant cysteine residues of hair keratins. The matrix proteins include the high-sulfur and high-glycine-tyrosine keratins. This chain is Keratin-associated protein 9-6, found in Homo sapiens (Human).